We begin with the raw amino-acid sequence, 85 residues long: Exodeoxyribonuclease 7 small subunit (85 aa).

Belongs to the XseB family. In terms of assembly, heterooligomer composed of large and small subunits.

The protein resides in the cytoplasm. It carries out the reaction Exonucleolytic cleavage in either 5'- to 3'- or 3'- to 5'-direction to yield nucleoside 5'-phosphates.. Bidirectionally degrades single-stranded DNA into large acid-insoluble oligonucleotides, which are then degraded further into small acid-soluble oligonucleotides. The protein is Exodeoxyribonuclease 7 small subunit of Alkalilimnicola ehrlichii (strain ATCC BAA-1101 / DSM 17681 / MLHE-1).